We begin with the raw amino-acid sequence, 292 residues long: MATMDFSKGHGTQNDFVVLPDLDVRVDLEPARVSALCDRQRGLGADGILRVARAGALADAGVLGALPDGVAAEDWFMDYRNSDGSIAEMCGNGVRVFAHYLKASGLESKDEFVVGSRAGARPVVVHGYDATHGDVTVAMGPIKDLGTSSATIDGRVFAGVGIDVGNPHLACVDEHVTAEVLSALDLSVSPGFDPGFFPHGVNIEIVTPIHDGGVHMRVHERGVGETRSCGTGTVAAAAAALKFDGRDEGSVLVRVLGGEVQVTVEGGEGSLRGPSVLVANGTISDAWWQSLV.

Residues N14 and N81 each contribute to the substrate site. C90 serves as the catalytic Proton donor. Substrate contacts are provided by residues 91-92 (GN), N166, N202, and 220-221 (ER). C229 functions as the Proton acceptor in the catalytic mechanism. Substrate is bound at residue 230 to 231 (GT).

It belongs to the diaminopimelate epimerase family. Homodimer.

The protein resides in the cytoplasm. It catalyses the reaction (2S,6S)-2,6-diaminopimelate = meso-2,6-diaminopimelate. The protein operates within amino-acid biosynthesis; L-lysine biosynthesis via DAP pathway; DL-2,6-diaminopimelate from LL-2,6-diaminopimelate: step 1/1. In terms of biological role, catalyzes the stereoinversion of LL-2,6-diaminopimelate (L,L-DAP) to meso-diaminopimelate (meso-DAP), a precursor of L-lysine and an essential component of the bacterial peptidoglycan. The protein is Diaminopimelate epimerase of Rhodococcus erythropolis (strain PR4 / NBRC 100887).